The sequence spans 396 residues: Putative arsenical pump-driving ATPase 1 (396 aa).

Position 8-15 (8-15 (GKGGVGKT)) interacts with ATP.

The protein belongs to the arsA ATPase family.

It carries out the reaction arsenite(in) + ATP + H2O = arsenite(out) + ADP + phosphate + H(+). Anion-transporting ATPase. Catalyzes the extrusion of arsenite. This is Putative arsenical pump-driving ATPase 1 (arsA1) from Aquifex aeolicus (strain VF5).